Here is a 264-residue protein sequence, read N- to C-terminus: GTP cyclohydrolase FolE2 (264 aa).

Belongs to the GTP cyclohydrolase IV family.

The catalysed reaction is GTP + H2O = 7,8-dihydroneopterin 3'-triphosphate + formate + H(+). It functions in the pathway cofactor biosynthesis; 7,8-dihydroneopterin triphosphate biosynthesis; 7,8-dihydroneopterin triphosphate from GTP: step 1/1. Its function is as follows. Converts GTP to 7,8-dihydroneopterin triphosphate. This chain is GTP cyclohydrolase FolE2, found in Nitratidesulfovibrio vulgaris (strain ATCC 29579 / DSM 644 / CCUG 34227 / NCIMB 8303 / VKM B-1760 / Hildenborough) (Desulfovibrio vulgaris).